Reading from the N-terminus, the 476-residue chain is Probable secreted beta-glucosidase SIM1 (476 aa).

The first 19 residues, 1–19, serve as a signal peptide directing secretion; that stretch reads MKFSTAVTTLISSGAIVSA. A compositionally biased stretch (low complexity) spans 111 to 203; that stretch reads ATASTSQGAS…SSSSSSSGSG (93 aa). The segment at 111–214 is disordered; sequence ATASTSQGAS…IYGDLADFSG (104 aa). An N-linked (GlcNAc...) asparagine glycan is attached at N423.

The protein belongs to the SUN family.

The protein localises to the secreted. It localises to the cell wall. In terms of biological role, involved in the remodeling of the cell wall during the various phases of yeast culture development and under various environmental conditions. Required for the maintenance of the CLB5 kinase activity. This is Probable secreted beta-glucosidase SIM1 (SIM1) from Saccharomyces cerevisiae (strain ATCC 204508 / S288c) (Baker's yeast).